The chain runs to 301 residues: MSLAGSSSSALHLDFPASTGSGVMHSRSVTGVHVHPVALFSILDHYLRRNDGQHRVIGTLLGTRTESEIEIKNCFAVPHLEDAEEGQVQVDMEYHRSMYELCQKVRPDEVIVGWYATSPELNTYSALIQDFYSRETAPHQAVHLTMDTTIDGSKPSGLGIKSYISSPLGATPKAENCVFLPLPTNLLHSTPEHSSLSLLASQNISSPLTDLDALAVSLKQVQSQLDRVLTYVRAVISGEKEGDKAVGRFLNDTISVVPAGLDDNKLETLFNAHLQDVLMVSYLANVVRAQAEVSSRLTLLT.

Positions 32-169 (VHVHPVALFS…IKSYISSPLG (138 aa)) constitute an MPN domain.

Belongs to the eIF-3 subunit F family. Component of the eukaryotic translation initiation factor 3 (eIF-3) complex.

The protein localises to the cytoplasm. In terms of biological role, component of the eukaryotic translation initiation factor 3 (eIF-3) complex, which is involved in protein synthesis of a specialized repertoire of mRNAs and, together with other initiation factors, stimulates binding of mRNA and methionyl-tRNAi to the 40S ribosome. The eIF-3 complex specifically targets and initiates translation of a subset of mRNAs involved in cell proliferation. This Mycosarcoma maydis (Corn smut fungus) protein is Eukaryotic translation initiation factor 3 subunit F.